Here is a 232-residue protein sequence, read N- to C-terminus: Thiamine import ATP-binding protein ThiQ (232 aa).

The region spanning 2–230 (LKLTDITWLY…KGSASAIWGI (229 aa)) is the ABC transporter domain. Residue 32–39 (GPSGAGKS) participates in ATP binding.

This sequence belongs to the ABC transporter superfamily. Thiamine importer (TC 3.A.1.19.1) family. In terms of assembly, the complex is composed of two ATP-binding proteins (ThiQ), two transmembrane proteins (ThiP) and a solute-binding protein (ThiB).

Its subcellular location is the cell inner membrane. It carries out the reaction thiamine(out) + ATP + H2O = thiamine(in) + ADP + phosphate + H(+). In terms of biological role, part of the ABC transporter complex ThiBPQ involved in thiamine import. Responsible for energy coupling to the transport system. This chain is Thiamine import ATP-binding protein ThiQ, found in Shigella flexneri.